The chain runs to 377 residues: MSSSVAEANHTEKEESLRLAIAVSLLRSKFQNHQSSSSTSRCYVSSESDALRWKQKAKERKKEIIRLQEDLKDAESSFHRDLFPANASCKCYFFDNLGVFSGRRIGEASESRFNDVLRRRFLRLARRRSRRKLTRSSQRLQPSEPDYEEEAEHLRISIDFLLELSEADSNDSNFSNWSHQAVDFIFASLKKLISMGRNLESVEESISFMITQLITRMCTPVKGNEVKQLETSVGFYVQHLIRKLGSEPFIGQRAIFAISQRISILAENLLFMDPFDESFPEMDECMFILIQLIEFLICDYLLPWANEAFDNVMFEEWIASVVHARKAVKALEERNGLYLLYMDRVTGELAKRVGQITSFREVEPAILDKILAYQEIE.

Positions 117–124 (LRRRFLRL) match the Nuclear localization signal motif.

Expressed in roots, stems, leaves, inflorescences and seedlings. Strongly expressed in meiocytes.

The protein resides in the nucleus. The protein localises to the cytoplasm. Its subcellular location is the cytoskeleton. It localises to the spindle. In terms of biological role, involved in meiotic spindle organization in meiocytes thus regulating chromosome segregation. Required for formation of meiotic DNA double-strand breaks (DSBs) during early recombination processes. The sequence is that of Protein MULTIPOLAR SPINDLE 1 from Arabidopsis thaliana (Mouse-ear cress).